The chain runs to 524 residues: Cytokinin dehydrogenase 4 (524 aa).

Positions 1–26 are cleaved as a signal peptide; that stretch reads MTNTLCLSLITLITLFISLTPTLIKS. 2 N-linked (GlcNAc...) asparagine glycosylation sites follow: Asn-39 and Asn-58. The FAD-binding PCMH-type domain maps to 60–249; it reads TDENPGAVLC…TRARIALDHA (190 aa). Ala-104, Gly-106, and Gly-108 together coordinate FAD. Pros-8alpha-FAD histidine is present on His-109. Ser-110 and Gln-114 together coordinate FAD. The N-linked (GlcNAc...) asparagine glycan is linked to Asn-124. Positions 173, 178, 184, 188, and 239 each coordinate FAD. N-linked (GlcNAc...) asparagine glycosylation is present at Asn-411. The FAD site is built by Tyr-482, Ser-517, and Gln-520.

This sequence belongs to the oxygen-dependent FAD-linked oxidoreductase family. It depends on FAD as a cofactor. Expressed in trichomes and in developing stomata of young growing leaves. Strong expression in stipules and in the root cap, but not detected in the root meristem.

It is found in the secreted. The protein localises to the extracellular space. The enzyme catalyses N(6)-dimethylallyladenine + A + H2O = 3-methyl-2-butenal + adenine + AH2. Catalyzes the oxidation of cytokinins, a family of N(6)-substituted adenine derivatives that are plant hormones, where the substituent is an isopentenyl group. The sequence is that of Cytokinin dehydrogenase 4 (CKX4) from Arabidopsis thaliana (Mouse-ear cress).